A 1177-amino-acid polypeptide reads, in one-letter code: DNA-directed RNA polymerase subunit beta (1177 aa).

Residues 1147–1161 (DDTEIEMRDTEDDDD) show a composition bias toward acidic residues. The disordered stretch occupies residues 1147-1177 (DDTEIEMRDTEDDDDHQSADKLNVEVETTKE). Positions 1162–1177 (HQSADKLNVEVETTKE) are enriched in basic and acidic residues.

Belongs to the RNA polymerase beta chain family. In terms of assembly, the RNAP catalytic core consists of 2 alpha, 1 beta, 1 beta' and 1 omega subunit. When a sigma factor is associated with the core the holoenzyme is formed, which can initiate transcription.

The catalysed reaction is RNA(n) + a ribonucleoside 5'-triphosphate = RNA(n+1) + diphosphate. DNA-dependent RNA polymerase catalyzes the transcription of DNA into RNA using the four ribonucleoside triphosphates as substrates. This chain is DNA-directed RNA polymerase subunit beta, found in Bacillus cereus (strain G9842).